Reading from the N-terminus, the 83-residue chain is Exodeoxyribonuclease 7 small subunit (83 aa).

This sequence belongs to the XseB family. Heterooligomer composed of large and small subunits.

The protein localises to the cytoplasm. The enzyme catalyses Exonucleolytic cleavage in either 5'- to 3'- or 3'- to 5'-direction to yield nucleoside 5'-phosphates.. In terms of biological role, bidirectionally degrades single-stranded DNA into large acid-insoluble oligonucleotides, which are then degraded further into small acid-soluble oligonucleotides. This is Exodeoxyribonuclease 7 small subunit from Rhodopseudomonas palustris (strain BisB5).